A 561-amino-acid chain; its full sequence is DNA ligase B (561 aa).

Catalysis depends on K125, which acts as the N6-AMP-lysine intermediate.

Belongs to the NAD-dependent DNA ligase family. LigB subfamily.

It carries out the reaction NAD(+) + (deoxyribonucleotide)n-3'-hydroxyl + 5'-phospho-(deoxyribonucleotide)m = (deoxyribonucleotide)n+m + AMP + beta-nicotinamide D-nucleotide.. Functionally, catalyzes the formation of phosphodiester linkages between 5'-phosphoryl and 3'-hydroxyl groups in double-stranded DNA using NAD as a coenzyme and as the energy source for the reaction. This Salmonella schwarzengrund (strain CVM19633) protein is DNA ligase B.